The primary structure comprises 119 residues: Large ribosomal subunit protein uL18 (119 aa).

Belongs to the universal ribosomal protein uL18 family. As to quaternary structure, part of the 50S ribosomal subunit; part of the 5S rRNA/L5/L18/L25 subcomplex. Contacts the 5S and 23S rRNAs.

This is one of the proteins that bind and probably mediate the attachment of the 5S RNA into the large ribosomal subunit, where it forms part of the central protuberance. This is Large ribosomal subunit protein uL18 from Clostridium tetani (strain Massachusetts / E88).